Here is a 1147-residue protein sequence, read N- to C-terminus: PDZ domain-containing protein 8 (1147 aa).

Residues 2–24 traverse the membrane as a helical segment; sequence GLLLLILASAVLGSFLTLLAQFL. The SMP-LTD domain occupies 87–293; that stretch reads APPTLETCYF…LPSYKIRFKP (207 aa). Residues 365–448 enclose the PDZ domain; sequence TVELIKGNLQ…RVLVYYQRPA (84 aa). Residues serine 490, serine 515, and serine 532 each carry the phosphoserine modification. Residues 504–673 form a disordered region; that stretch reads ELKEETQPLS…DSSDDPQMWE (170 aa). Residues 510–524 show a composition bias toward polar residues; sequence QPLSHSPKRTPTTLS. Residues 557 to 576 are compositionally biased toward polar residues; sequence KPSTLKTSETTEAAQVSKPQ. Positions 580 to 596 are enriched in pro residues; the sequence is FKPPVPPRPQGRVPLPP. A Phorbol-ester/DAG-type zinc finger spans residues 833–884; sequence KHSFQDTQFQNPTWCDYCKKKVWTKAASQCMFCAYVCHKKCQEKCLAETPLC. The segment at 948–990 is disordered; the sequence is RLSEPGTDLVEPSPKHTPNTSDNEGSDTEVCGSNSPSKRGNSA. Phosphoserine is present on residues serine 960 and serine 973. Polar residues predominate over residues 978–987; that stretch reads CGSNSPSKRG. Residues 1021–1056 are a coiled coil; it reads PTEERIQKLEFMLDKLQNEIDQELEHNNSLVREEKE. Polar residues predominate over residues 1126-1137; the sequence is QLIDSQPFSNIS. The interval 1126–1147 is disordered; that stretch reads QLIDSQPFSNISDDLFGPSESV.

In terms of assembly, interacts with MSN.

The protein resides in the endoplasmic reticulum membrane. Its function is as follows. Molecular tethering protein that connects endoplasmic reticulum and mitochondria membranes. PDZD8-dependent endoplasmic reticulum-mitochondria membrane tethering is essential for endoplasmic reticulum-mitochondria Ca(2+) transfer. In neurons, involved in the regulation of dendritic Ca(2+) dynamics by regulating mitochondrial Ca(2+) uptake in neurons. The protein is PDZ domain-containing protein 8 of Mus musculus (Mouse).